The following is a 62-amino-acid chain: Large ribosomal subunit protein uL30 (62 aa).

Belongs to the universal ribosomal protein uL30 family. Part of the 50S ribosomal subunit.

The sequence is that of Large ribosomal subunit protein uL30 from Gluconobacter oxydans (strain 621H) (Gluconobacter suboxydans).